A 397-amino-acid chain; its full sequence is ORC1-type DNA replication protein 1 (397 aa).

Residues T67 to A71, Y208, and R220 contribute to the ATP site.

This sequence belongs to the CDC6/cdc18 family.

Involved in regulation of DNA replication. In Sulfolobus acidocaldarius (strain ATCC 33909 / DSM 639 / JCM 8929 / NBRC 15157 / NCIMB 11770), this protein is ORC1-type DNA replication protein 1 (cdc6-1).